A 787-amino-acid polypeptide reads, in one-letter code: Formate acetyltransferase (787 aa).

Residues 8-629 (NIFEQAWDGF…GNSPVHKGVF (622 aa)) form the PFL domain. Residue cysteine 416 is the S-acetylcysteine intermediate of the active site. Cysteine 417 serves as the catalytic Cysteine radical intermediate. The Glycine radical domain occupies 645-774 (SPGANPSNKA…LTERVFHEVL (130 aa)). Glycine 749 bears the Glycine radical mark.

This sequence belongs to the glycyl radical enzyme (GRE) family. PFL subfamily. In terms of assembly, homodimer.

Its subcellular location is the cytoplasm. The catalysed reaction is formate + acetyl-CoA = pyruvate + CoA. Its pathway is fermentation; pyruvate fermentation; formate from pyruvate: step 1/1. This is Formate acetyltransferase (pfl) from Lactococcus lactis subsp. cremoris (strain MG1363).